The chain runs to 633 residues: GRAM domain-containing protein 4 (633 aa).

Disordered stretches follow at residues 1-46 (MGIA…VRPR), 72-109 (LAES…AGPG), and 182-216 (VLKA…RSQG). A compositionally biased stretch (basic and acidic residues) spans 27–39 (PWDKGLSGREPPR). Residues S75 and S79 each carry the phosphoserine modification. Positions 95-104 (SPRDSEELRD) are enriched in basic and acidic residues. Residues 134-190 (HLEIALLEKHFLQEELRKLREETNSEMLRQELDRERQRRIELEQKMQEVLKARSEEQ) adopt a coiled-coil conformation. A compositionally biased stretch (low complexity) spans 190 to 205 (QPAQPQQPPKGQSQAS). 3 helical membrane passes run 295–315 (VYMN…LAIL), 389–409 (TTQK…FFPY), and 411–431 (LVGL…DFIF). Positions 500 to 578 (GNFHEIFNLT…MDITDIQKYK (79 aa)) constitute a GRAM domain.

Interacts with RTN4 (isoform B).

The protein resides in the mitochondrion membrane. It localises to the endoplasmic reticulum membrane. Its function is as follows. Plays a role as a mediator of E2F1-induced apoptosis in the absence of p53/TP53. Inhibits TLR9 response to nucelic acids and regulates TLR9-mediated innate immune response. The polypeptide is GRAM domain-containing protein 4 (Mus musculus (Mouse)).